A 527-amino-acid polypeptide reads, in one-letter code: MTQQAAEVAKRRTFAIISHPDAGKTTITEKLLLMGKAISVAGTVKSRKSDRHATSDWMEMEKQRGISITTSVMQFPYRDHMINLLDTPGHEDFSEDTYRTLTAVDSALMVLDGGKGVEPRTIALMDVCRLRDTPIVSFINKLDRDIRDPIELLDEIEAVLKIKAAPITWPIGCYRDFKGVYHLADDYIIVYTAGHGHERTETKIIEKLDSDEARAHLGDEYERFVEQLELVQGACHEFNQQEFIDGQLTPVFFGTALGNFGVDHVLDAVVNWAPKPLARVANERTVEPAEEKFSGFVFKIQANMDPKHRDRIAFMRICSGRYDKGMKMRHVRLGKDVRIGDALTFFSSEREQLEEAYAGDIIGLHNHGTIQIGDTFTEGEALGFTGIPHFAPELFRRVRLKDPLKSKQLRQGLQQLAEEGATQVFFPQRSNDIILGAVGVLQFDVVASRLKEEYKVECAYEPITVWSARWIDCDDKKKLEEFENKAVENLAVDGGGHLTYLAPTRVNLALMEERWPDVKFRATREHH.

In terms of domain architecture, tr-type G spans 9–277 (AKRRTFAIIS…AVVNWAPKPL (269 aa)). Residues 18 to 25 (SHPDAGKT), 86 to 90 (DTPGH), and 140 to 143 (NKLD) each bind GTP.

The protein belongs to the TRAFAC class translation factor GTPase superfamily. Classic translation factor GTPase family. PrfC subfamily.

It localises to the cytoplasm. Its function is as follows. Increases the formation of ribosomal termination complexes and stimulates activities of RF-1 and RF-2. It binds guanine nucleotides and has strong preference for UGA stop codons. It may interact directly with the ribosome. The stimulation of RF-1 and RF-2 is significantly reduced by GTP and GDP, but not by GMP. This Pseudomonas syringae pv. syringae (strain B728a) protein is Peptide chain release factor 3.